Here is a 358-residue protein sequence, read N- to C-terminus: MTAYLLAGGGTAGHVNPLLAVADRLRRDDPAAEVLVLGTAEGLEARLVPARGYELATIPRLPFPRRPNAAAVRFPGEYRRSVRAVGELIRARGIAAVVGFGGYAAAPAYSAARKAAVPLILHEANARPGLASRLGARYTPWVGVAFEGTRLPHARFVGMPLRPEIEELDRVAARPAALAEFGLAADRPTLLVTGGSLGARRINQTIAARAVRLTEAGWQVLHIQGGRGELSDPGLPHYRLLGYCDRMDLALALADFAVARAGAATLCEFAALGVPAVYVPFPIGNGEQRHNAAGVVAAGGGVLVDDAGFLPAWVDAQLLPLLADRARVAEMAERAASVGVRDGSDRVVALIRTGLSAA.

UDP-N-acetyl-alpha-D-glucosamine contacts are provided by residues 11–13 (TAG), Asn-125, Arg-162, Ser-196, and Gln-288.

Belongs to the glycosyltransferase 28 family. MurG subfamily.

The protein localises to the cell membrane. The enzyme catalyses di-trans,octa-cis-undecaprenyl diphospho-N-acetyl-alpha-D-muramoyl-L-alanyl-D-glutamyl-meso-2,6-diaminopimeloyl-D-alanyl-D-alanine + UDP-N-acetyl-alpha-D-glucosamine = di-trans,octa-cis-undecaprenyl diphospho-[N-acetyl-alpha-D-glucosaminyl-(1-&gt;4)]-N-acetyl-alpha-D-muramoyl-L-alanyl-D-glutamyl-meso-2,6-diaminopimeloyl-D-alanyl-D-alanine + UDP + H(+). Its pathway is cell wall biogenesis; peptidoglycan biosynthesis. Functionally, cell wall formation. Catalyzes the transfer of a GlcNAc subunit on undecaprenyl-pyrophosphoryl-MurNAc-pentapeptide (lipid intermediate I) to form undecaprenyl-pyrophosphoryl-MurNAc-(pentapeptide)GlcNAc (lipid intermediate II). The chain is UDP-N-acetylglucosamine--N-acetylmuramyl-(pentapeptide) pyrophosphoryl-undecaprenol N-acetylglucosamine transferase from Leifsonia xyli subsp. xyli (strain CTCB07).